The chain runs to 78 residues: uncharacterized protein (78 aa).

This is an uncharacterized protein from Mycoplasma (Bacteriophage L2).